The following is a 359-amino-acid chain: Fructose-bisphosphate aldolase class 2 (359 aa).

Ser-62 contributes to the D-glyceraldehyde 3-phosphate binding site. Asp-110 acts as the Proton donor in catalysis. His-111, Asp-145, Glu-175, and His-227 together coordinate Zn(2+). Residue Gly-228 participates in dihydroxyacetone phosphate binding. His-265 provides a ligand contact to Zn(2+). Dihydroxyacetone phosphate contacts are provided by residues 266–268 (GGS) and 287–290 (NIDT).

This sequence belongs to the class II fructose-bisphosphate aldolase family. Requires Zn(2+) as cofactor.

It catalyses the reaction beta-D-fructose 1,6-bisphosphate = D-glyceraldehyde 3-phosphate + dihydroxyacetone phosphate. It participates in carbohydrate degradation; glycolysis; D-glyceraldehyde 3-phosphate and glycerone phosphate from D-glucose: step 4/4. In terms of biological role, catalyzes the aldol condensation of dihydroxyacetone phosphate (DHAP or glycerone-phosphate) with glyceraldehyde 3-phosphate (G3P) to form fructose 1,6-bisphosphate (FBP) in gluconeogenesis and the reverse reaction in glycolysis. The sequence is that of Fructose-bisphosphate aldolase class 2 (fbaA) from Buchnera aphidicola subsp. Baizongia pistaciae (strain Bp).